We begin with the raw amino-acid sequence, 141 residues long: D-aminoacyl-tRNA deacylase (141 aa).

The Gly-cisPro motif, important for rejection of L-amino acids motif lies at 133 to 134; sequence GP.

This sequence belongs to the DTD family. In terms of assembly, homodimer.

The protein localises to the cytoplasm. The enzyme catalyses glycyl-tRNA(Ala) + H2O = tRNA(Ala) + glycine + H(+). It catalyses the reaction a D-aminoacyl-tRNA + H2O = a tRNA + a D-alpha-amino acid + H(+). In terms of biological role, an aminoacyl-tRNA editing enzyme that deacylates mischarged D-aminoacyl-tRNAs. Also deacylates mischarged glycyl-tRNA(Ala), protecting cells against glycine mischarging by AlaRS. Acts via tRNA-based rather than protein-based catalysis; rejects L-amino acids rather than detecting D-amino acids in the active site. By recycling D-aminoacyl-tRNA to D-amino acids and free tRNA molecules, this enzyme counteracts the toxicity associated with the formation of D-aminoacyl-tRNA entities in vivo and helps enforce protein L-homochirality. The polypeptide is D-aminoacyl-tRNA deacylase (Streptomyces coelicolor (strain ATCC BAA-471 / A3(2) / M145)).